A 178-amino-acid chain; its full sequence is ATP-dependent protease subunit HslV (178 aa).

Residue T7 is part of the active site. Na(+) contacts are provided by G162, C165, and T168.

Belongs to the peptidase T1B family. HslV subfamily. In terms of assembly, a double ring-shaped homohexamer of HslV is capped on each side by a ring-shaped HslU homohexamer. The assembly of the HslU/HslV complex is dependent on binding of ATP.

Its subcellular location is the cytoplasm. It carries out the reaction ATP-dependent cleavage of peptide bonds with broad specificity.. Its activity is regulated as follows. Allosterically activated by HslU binding. Functionally, protease subunit of a proteasome-like degradation complex believed to be a general protein degrading machinery. The chain is ATP-dependent protease subunit HslV from Burkholderia multivorans (strain ATCC 17616 / 249).